The following is a 179-amino-acid chain: Large ribosomal subunit protein uL5 (179 aa).

This sequence belongs to the universal ribosomal protein uL5 family. Part of the 50S ribosomal subunit; part of the 5S rRNA/L5/L18/L25 subcomplex. Contacts the 5S rRNA and the P site tRNA. Forms a bridge to the 30S subunit in the 70S ribosome.

In terms of biological role, this is one of the proteins that bind and probably mediate the attachment of the 5S RNA into the large ribosomal subunit, where it forms part of the central protuberance. In the 70S ribosome it contacts protein S13 of the 30S subunit (bridge B1b), connecting the 2 subunits; this bridge is implicated in subunit movement. Contacts the P site tRNA; the 5S rRNA and some of its associated proteins might help stabilize positioning of ribosome-bound tRNAs. This is Large ribosomal subunit protein uL5 from Deinococcus geothermalis (strain DSM 11300 / CIP 105573 / AG-3a).